The following is a 791-amino-acid chain: Interleukin-17 receptor C (791 aa).

The N-terminal stretch at 1-20 is a signal peptide; it reads MPVPWFLLSLALGRSPVVLS. Topologically, residues 21–538 are extracellular; the sequence is LERLVGPQDA…CPMDKYIHKR (518 aa). Residues Asn-189 and Asn-257 are each glycosylated (N-linked (GlcNAc...) asparagine). A disulfide bridge connects residues Cys-265 and Cys-277. Asn-284, Asn-297, Asn-324, and Asn-334 each carry an N-linked (GlcNAc...) asparagine glycan. 3 disulfide bridges follow: Cys-341–Cys-391, Cys-343–Cys-359, and Cys-400–Cys-409. N-linked (GlcNAc...) asparagine glycans are attached at residues Asn-420, Asn-443, and Asn-477. Cys-439 and Cys-453 form a disulfide bridge. 2 disulfides stabilise this stretch: Cys-481-Cys-488 and Cys-515-Cys-529. The chain crosses the membrane as a helical span at residues 539–559; it reads WALVWLACLLFAAALSLILLL. Residues 560–791 are Cytoplasmic-facing; it reads KKDHAKGWLR…GAGPGAGDGT (232 aa). Residues 583–735 form the SEFIR domain; that stretch reads GRAALLLYSA…LPSQLPDFLG (153 aa). The segment at 762–791 is disordered; the sequence is ALDSYFHPPGTPAPGRGVGPGAGPGAGDGT. Gly residues predominate over residues 777 to 791; sequence RGVGPGAGPGAGDGT.

Homodimer; disulfide-linked. Heterodimer with IL17RA. Heterodimerization with IL17RA is independent of the cytoplasmic tail. Associates with non-glycosylated IL17RA constitutively. Binding of IL17A and IL17F induces association with glycosylated IL17RA. Forms complexes with 2:1 binding stoichiometry: two receptor chains for one interleukin molecule. IL17A homodimer preferentially drives the formation of IL17RA-IL17RC heterodimeric receptor complex, whereas IL17F homodimer forms predominantly complexes with IL17RC homodimer. IL17A-IL17F forms complexes with IL17RA-IL17RC, but with lower affinity when compared to IL17A homodimer. IL17RC chain cannot distinguish between IL17A and IL17F molecules, potentially enabling the formation of topologically distinct complexes. Interacts (through SEFIR domain and extended downstream region) with TRAF3IP2/ACT1 (phosphorylated). Expressed in prostate, skeletal muscle, kidney and placenta (at protein level). Expressed in brain, cartilage, colon, heart, intestine, kidney, liver, lung, muscle, placenta, and prostate. Also detected in thyroid, trachea and adrenal gland. Low expression in thymus and leukocytes.

It is found in the cell membrane. Its function is as follows. Receptor for IL17A and IL17F, major effector cytokines of innate and adaptive immune system involved in antimicrobial host defense and maintenance of tissue integrity. Receptor for IL17A and IL17F, major effector cytokines of innate and adaptive immune system involved in antimicrobial host defense and maintenance of tissue integrity. Receptor for IL17A and IL17F homodimers as part of a heterodimeric complex with IL17RA. Receptor for the heterodimer formed by IL17A and IL17B as part of a heterodimeric complex with IL17RA. Has also been shown to be the cognate receptor for IL17F and to bind IL17A with high affinity without the need for IL17RA. Upon binding of IL17F homodimer triggers downstream activation of TRAF6 and NF-kappa-B signaling pathway. Induces transcriptional activation of IL33, a potent cytokine that stimulates group 2 innate lymphoid cells and adaptive T-helper 2 cells involved in pulmonary allergic response to fungi. Promotes sympathetic innervation of peripheral organs by coordinating the communication between gamma-delta T cells and parenchymal cells. Stimulates sympathetic innervation of thermogenic adipose tissue by driving TGFB1 expression. Binding of IL17A-IL17F to IL17RA-IL17RC heterodimeric receptor complex triggers homotypic interaction of IL17RA and IL17RC chains with TRAF3IP2 adapter through SEFIR domains. This leads to downstream TRAF6-mediated activation of NF-kappa-B and MAPkinase pathways ultimately resulting in transcriptional activation of cytokines, chemokines, antimicrobial peptides and matrix metalloproteinases, with potential strong immune inflammation. Primarily induces neutrophil activation and recruitment at infection and inflammatory sites. Stimulates the production of antimicrobial beta-defensins DEFB1, DEFB103A, and DEFB104A by mucosal epithelial cells, limiting the entry of microbes through the epithelial barriers. Receptor for both IL17A and IL17F. In terms of biological role, does not bind IL17A or IL17F. This is Interleukin-17 receptor C (IL17RC) from Homo sapiens (Human).